A 756-amino-acid chain; its full sequence is MTNEGRFKAKGFVRTSSTTRPIQALSFHMIGILLQCVLFISVLSIAVSEALCNSQDRESLLWFSGNVSSSVSPLNWNPSIDCCSWEGITCDDSPDSHITAISLPFRALYGKLPLSVLRLHHLSQLNLSHNRLSGHLPSGFLSALDQLKVLDLSYNSLDGELPVEQTFRNGSNRCFPIRIVDLSSNFLQGEILPSSIFMQGTFDLISFNVSKNSFTGSIPSFMCKSSPQLSKLDFSYNDFTGNIPQGLGRCLKLSVLQAGFNNISGEIPSDIYNLSELEQLFLPVNHLSGKINDDITHLTKLKSLELYSNHLGGEIPMDIGQLSRLQSLQLHINNITGTVPPSLANCTNLVKLNLRLNRLEGTLSELDFSRFQSLSILDLGNNSFSGDFPWRVHSCKSLSAMRFASNKLTGQISPHVLELESLSILSLSDNKLMNITGALGILQGCRNLSTLLIGKNFYNETFPSDKDLISSDGFPNLQIFASGGSGLRGEIPAWLIKLKSLAVIDLSHNQLVGSIPGWLGTFPHLFYIDLSENLLSGELPKDLFQLKALMSQKAYDATERNYLKLPVFVSPNNVTTHQQYNQLFSLPPGIYIRRNNLKGSIPIEVGQLKVLHVLELSHNYLSGIIPHELSKLTSLERLDLSNNHLSGRIPWSLTSLHYMSYFNVVNNSLDGPIPTGSQFDTFPQANFKGNPLLCGGILLTSCKASTKLPATTTNKADTEDEEELKFIFILGVATGFFVSYCFYWCFFARLDAFISK.

The N-terminal stretch at 1–50 (MTNEGRFKAKGFVRTSSTTRPIQALSFHMIGILLQCVLFISVLSIAVSEA) is a signal peptide. An N-cap region spans residues 51–88 (LCNSQDRESLLWFSGNVSSSVSPLNWNPSIDCCSWEGI). The Extracellular segment spans residues 51 to 725 (LCNSQDRESL…ADTEDEEELK (675 aa)). The N-linked (GlcNAc...) asparagine glycan is linked to N66. LRR repeat units lie at residues 95–119 (DSHITAISLPFRALYGKLPLSVLRL), 120–143 (HHLSQLNLSHNRLSGHLPSGFLSA), 145–169 (DQLKVLDLSYNSLDGELPVEQTFRN), 174–199 (CFPIRIVDLSSNFLQGEILPSSIFMQ), 201–225 (TFDLISFNVSKNSFTGSIPSFMCKS), 226–250 (SPQLSKLDFSYNDFTGNIPQGLGRC), 252–274 (KLSVLQAGFNNISGEIPSDIYNL), 275–298 (SELEQLFLPVNHLSGKINDDITHL), 299–322 (TKLKSLELYSNHLGGEIPMDIGQL), 323–346 (SRLQSLQLHINNITGTVPPSLANC), 348–370 (NLVKLNLRLNRLEGTLSELDFSR), 371–395 (FQSLSILDLGNNSFSGDFPWRVHSC), 397–419 (SLSAMRFASNKLTGQISPHVLEL), 420–443 (ESLSILSLSDNKLMNITGALGILQ), 445–471 (CRNLSTLLIGKNFYNETFPSDKDLISS), 474–498 (FPNLQIFASGGSGLRGEIPAWLIKL), 499–521 (KSLAVIDLSHNQLVGSIPGWLGT), and 522–546 (FPHLFYIDLSENLLSGELPKDLFQL). N-linked (GlcNAc...) asparagine glycosylation is found at N126 and N169. N-linked (GlcNAc...) asparagine glycosylation is present at N208. Residues N262 and N273 are each glycosylated (N-linked (GlcNAc...) asparagine). N-linked (GlcNAc...) asparagine glycosylation is found at N334 and N345. N381 carries N-linked (GlcNAc...) asparagine glycosylation. 3 N-linked (GlcNAc...) asparagine glycosylation sites follow: N434, N447, and N459. The stretch at 548–569 (ALMSQKAYDATERNYLKLPVFV) is one LRR 19; degenerate repeat. 4 LRR repeats span residues 570 to 593 (SPNNVTTHQQYNQLFSLPPGIYIR), 608 to 631 (LKVLHVLELSHNYLSGIIPHELSK), 632 to 656 (LTSLERLDLSNNHLSGRIPWSLTSL), and 658 to 681 (YMSYFNVVNNSLDGPIPTGSQFDT). The N-linked (GlcNAc...) asparagine glycan is linked to N573. N666 carries an N-linked (GlcNAc...) asparagine glycan. Residues 699–725 (LTSCKASTKLPATTTNKADTEDEEELK) form a C-cap/acidic domain region. A helical membrane pass occupies residues 726-746 (FIFILGVATGFFVSYCFYWCF). At 747 to 756 (FARLDAFISK) the chain is on the cytoplasmic side.

This sequence belongs to the RLP family. As to expression, expressed at very low levels in the shoot apex.

The protein resides in the cell membrane. Involved in the perception of CLV3 and CLV3-like peptides, that act as extracellular signals regulating meristems maintenance. Contributes, with WAKL22/RFO1, to resistance to F.oxysporum (f.) matthioli in cv. Columbia relative to cv. Ty-0. The protein is Receptor-like protein 3 of Arabidopsis thaliana (Mouse-ear cress).